The following is a 142-amino-acid chain: Hemoglobin subunit alpha-A (142 aa).

Residues 2–142 form the Globin domain; that stretch reads VLSGSDKTNV…VGNVLTAKYR (141 aa). Residue H59 participates in O2 binding. Heme b is bound at residue H88.

It belongs to the globin family. Heterotetramer of two alpha chains and two beta chains. In terms of tissue distribution, red blood cells.

In terms of biological role, involved in oxygen transport from the lung to the various peripheral tissues. This chain is Hemoglobin subunit alpha-A (HBAA), found in Ara ararauna (Blue-and-yellow macaw).